Here is an 808-residue protein sequence, read N- to C-terminus: Zinc finger protein 148 (808 aa).

Disordered stretches follow at residues 15–86 (SPVG…ISQD) and 131–162 (DSLILNKKEKKPGRDPSDCHKKKKRKQRSPAK). Over residues 56–73 (AEDDDDEDEEEDDDDDLA) the composition is skewed to acidic residues. Over residues 150–159 (HKKKKRKQRS) the composition is skewed to basic residues. 4 consecutive C2H2-type zinc fingers follow at residues 180–202 (HICEHCNAAFRTNYHLQRHVFIH), 208–230 (FQCNQCDMRFIQKYLLQRHEKIH), 236–258 (FRCDECGMKFIQKYHMERHKRTH), and 264–287 (YQCDYCHQFFSRTDRVLKHRRMCH). Disordered regions lie at residues 305–338 (RTPENLGFSFPAKDCTLPKKKRQKTSDKSRASIT), 596–617 (SINSSDESSPAEALVTSSQAPP), and 705–736 (SFSGDETNPSSVSPTEDFLDQVTSPKKTDPQS). 2 stretches are compositionally biased toward polar residues: residues 705-718 (SFSGDETNPSSVSP) and 725-736 (QVTSPKKTDPQS).

The protein belongs to the krueppel C2H2-type zinc-finger protein family.

It is found in the nucleus. Involved in transcriptional regulation. Represses the transcription of a number of genes. Required for primitive and definitive hematopoiesis during embryonic development. This is Zinc finger protein 148 (znf148) from Danio rerio (Zebrafish).